A 241-amino-acid polypeptide reads, in one-letter code: Fatty acid metabolism regulator protein (241 aa).

The region spanning 11–79 (QSPAALAEEY…HGKPTKVNNI (69 aa)) is the HTH gntR-type domain. The H-T-H motif DNA-binding region spans 39 to 58 (ERDLADKIGVTRTTLREVLQ).

In terms of assembly, homodimer.

It is found in the cytoplasm. Functionally, multifunctional regulator of fatty acid metabolism. This is Fatty acid metabolism regulator protein from Haemophilus influenzae (strain 86-028NP).